We begin with the raw amino-acid sequence, 315 residues long: KH domain-containing protein At5g56140 (315 aa).

Disordered regions lie at residues 1-53 (MMMM…GGLR) and 136-158 (SQFP…SPGS). The segment covering 7–28 (LGGGGGGGGGSGGGIGGGGGGR) has biased composition (gly residues). Composition is skewed to polar residues over residues 31 to 53 (TYSS…GGLR) and 136 to 146 (SQFPSERSVPS). The 68-residue stretch at 171–238 (DIPVDNYPNF…EHLNEPLHIL (68 aa)) folds into the KH domain. Positions 289–315 (REEGSPMSGSVSPYNSLGMKRAKTREG) are disordered. Serine 300 bears the Phosphoserine mark.

It is found in the nucleus. This chain is KH domain-containing protein At5g56140, found in Arabidopsis thaliana (Mouse-ear cress).